The primary structure comprises 550 residues: Glucose import ATP-binding protein TsgD13 (550 aa).

2 consecutive ABC transporter domains span residues 7–270 (LRME…VGRE) and 287–533 (LRAR…TGGG). Residue 39–46 (GENGAGKS) coordinates ATP. The interval 529-550 (MTGGGDATATAGAQVRGLGGSS) is disordered.

Belongs to the ABC transporter superfamily. In terms of assembly, the complex is composed of two ATP-binding proteins (TsgD13), two transmembrane proteins (TsgB13 and TsgC13) and a solute-binding protein (TsgA13).

Its subcellular location is the cell membrane. It carries out the reaction D-glucose(out) + ATP + H2O = D-glucose(in) + ADP + phosphate + H(+). In terms of biological role, part of an ABC transporter complex involved in glucose import. Responsible for energy coupling to the transport system. This chain is Glucose import ATP-binding protein TsgD13 (tsgD13), found in Haloferax volcanii (strain ATCC 29605 / DSM 3757 / JCM 8879 / NBRC 14742 / NCIMB 2012 / VKM B-1768 / DS2) (Halobacterium volcanii).